Reading from the N-terminus, the 146-residue chain is Hemoglobin subunit beta (146 aa).

A Globin domain is found at 2-146; that stretch reads HWTAEEKQLI…VAHALARKYH (145 aa). Residues His-63 and His-92 each contribute to the heme b site.

It belongs to the globin family. As to quaternary structure, heterotetramer of two alpha chains and two beta chains. As to expression, red blood cells.

Functionally, involved in oxygen transport from the lung to the various peripheral tissues. This Aegypius monachus (Cinereous vulture) protein is Hemoglobin subunit beta (HBB).